The chain runs to 239 residues: RNA-binding protein 38 (239 aa).

In terms of domain architecture, RRM spans 34 to 111; sequence TKIFVGGLPY…RKANVNLAYL (78 aa).

Belongs to the RBM38 family.

Its subcellular location is the cytoplasm. It localises to the cytosol. The protein localises to the nucleus. Its function is as follows. RNA-binding protein that specifically bind the 3'-UTR of CDKN1A transcripts, leading to maintain the stability of CDKN1A transcripts, thereby acting as a mediator of the p53/TP53 family to regulate CDKN1A. CDKN1A is a cyclin-dependent kinase inhibitor transcriptionally regulated by the p53/TP53 family to induce cell cycle arrest. Isoform 1, but not isoform 2, has the ability to induce cell cycle arrest in G1 and maintain the stability of CDKN1A transcripts induced by p53/TP53. Also acts as a mRNA splicing factor. Specifically regulates the expression of FGFR2-IIIb, an epithelial cell-specific isoform of FGFR2. Plays a role in myogenic differentiation. Functionally, (Microbial infection) Essential factor for the splicing of the pre-mRNAs of human parvovirus B19 (B19V) and for the expression of B19V 11-kDa protein, which enhances viral replication. In Homo sapiens (Human), this protein is RNA-binding protein 38 (RBM38).